The primary structure comprises 522 residues: Putative E3 ubiquitin-protein ligase RING1a (522 aa).

The segment covering 1 to 10 (MSVKNNSFSS) has biased composition (polar residues). The tract at residues 1-119 (MSVKNNSFSS…RSPSSISGDQ (119 aa)) is disordered. Over residues 32–64 (LQEKDETKEEKEGDEEVKHDEAEEDQEVVKPND) the composition is skewed to basic and acidic residues. The segment covering 65–106 (AEEDDDGDDAEEDEEEEVEAEEDEEAEEEEEEEEEEEEEEED) has biased composition (acidic residues). Residues 136–176 (CPICLGIIKKTRTVMECLHRFCRECIDKSMRLGNNECPACR) form an RING-type zinc finger. Disordered regions lie at residues 250 to 347 (VLMR…DTKG) and 363 to 385 (RGGTRSNTRHGNNTSGGSSKSVR). Basic and acidic residues predominate over residues 287 to 306 (NNNRGRDKDSSSDERGTEVR). The span at 316–325 (SRSTQHPSSS) shows a compositional bias: low complexity. Polar residues-rich tracts occupy residues 326–336 (GANKNNGNCAD) and 366–384 (TRSNTRHGNNTSGGSSKSV).

As to quaternary structure, homodimer or heterodimer with RING1B. Interacts with CLF. Component of the PRC1-like complex, at least composed of RING1A, RING1B and LHP1.

The protein resides in the nucleus. The enzyme catalyses S-ubiquitinyl-[E2 ubiquitin-conjugating enzyme]-L-cysteine + [acceptor protein]-L-lysine = [E2 ubiquitin-conjugating enzyme]-L-cysteine + N(6)-ubiquitinyl-[acceptor protein]-L-lysine.. The protein operates within protein modification; protein ubiquitination. In terms of biological role, putative E3 ubiquitin-protein ligase that mediates monoubiquitination of 'Lys-119' of histone H2A (H2AK119ub), thereby playing a central role in histone code and gene regulation. Functionally, as part of the PRC1-like complex, repress class I KNOX gene expression. PcG PRC1 complex maintains the transcriptionally repressive state of many genes, including Hox genes, throughout development. PcG PRC1 complex acts via chromatin remodeling and modification of histones, rendering chromatin heritably changed in its expressibility. The protein is Putative E3 ubiquitin-protein ligase RING1a (RING1A) of Arabidopsis thaliana (Mouse-ear cress).